The sequence spans 128 residues: MILLAFSGELFKRINTSPIVHVERRTNPTTTVTVTTKPSPTPISPNQCNTNKIQCCNSVQSSDAPLLTGLLGLLGIVLQGVIPIGVTCSPISVIGIGGNSCSAQTVCCENNTFNGVIAIGCTPINIDL.

4 cysteine pairs are disulfide-bonded: Cys-48/Cys-107, Cys-55/Cys-101, Cys-56/Cys-88, and Cys-108/Cys-121. Asn-110 carries N-linked (GlcNAc...) asparagine glycosylation.

Belongs to the fungal hydrophobin family. Self-assembles to form functional amyloid fibrils called rodlets. Self-assembly into fibrillar rodlets occurs spontaneously at hydrophobic:hydrophilic interfaces and the rodlets further associate laterally to form amphipathic monolayers.

It localises to the secreted. Its subcellular location is the cell wall. Aerial growth, conidiation, and dispersal of filamentous fungi in the environment rely upon a capability of their secreting small amphipathic proteins called hydrophobins (HPBs) with low sequence identity. Class I can self-assemble into an outermost layer of rodlet bundles on aerial cell surfaces, conferring cellular hydrophobicity that supports fungal growth, development and dispersal; whereas Class II form highly ordered films at water-air interfaces through intermolecular interactions but contribute nothing to the rodlet structure. In Pleurotus ostreatus (strain PC15) (Oyster mushroom), this protein is Class I hydrophobin 19.